The primary structure comprises 130 residues: Protein lgg-2 (130 aa).

Residue G130 is the site of Phosphatidylethanolamine amidated glycine attachment.

The protein belongs to the ATG8 family. In terms of assembly, may interact with vps-39. Interacts with lgg-3; the interaction is direct. Interacts with atg-16.1 (via WD domain) and atg-16.2 (via WD 5-6 repeats); the interactions are direct. Interacts with sepa-1 (via the LIR motifs); the interaction is direct. Interacts with sqst-1 (via the LIR motifs); the interaction is direct. Interacts with epg-2 (via the LIR motifs); the interaction is weak. Interacts with atg-7; the interaction is direct. Interacts with atg-3. The interaction with atg-7 and atg-3 may be required for the lipidation of lgg-2. In terms of processing, this protein is subject to lipidation. Lipidation is regulated by lgg-1.

It is found in the cytoplasmic vesicle. The protein localises to the autophagosome. The protein resides in the cytoplasm. Its subcellular location is the cell membrane. In terms of biological role, ubiquitin-like modifier involved in the formation of autophagosomal vacuoles (autophagosomes). When lipidated mediates tethering between adjacent membranes and stimulates membrane fusion. Less effective at promoting membrane fusion than lgg-1. Acts upstream of the autophagy protein epg-5 in the aggrephagy pathway, which is the macroautophagic degradation of ubiquitinated protein aggregates, and preferentially interacts with autophagy proteins and substrates containing LIR motifs to mediate autophagosome formation and protein aggregate degradation. In particular binds to components of an atg-5-lgg-3-atg-16 complex to regulate autophagosome formation and cargo sequestration. Required for the degradation of specific sqst-1-containing aggregates during embryogenesis and the early stages of larval development. Involved in allophagy, which is an autophagic process in which paternal mitochondria and organelles are degraded during fertilization, and moreover is required for the degradation of lgg-1-positive allophagic autophagosomes in embryos. Involved in xenophagy, the autophagy-mediated degradation of pathogens and pathogen products, such as toxins. Also plays a role in membrane-pore repair. Through HOPS complex subunit vps-39, tethers lysosomes with autophagosomes to form autolysosomes. Plays a role in the distribution and clearance of germ cell specific P-granules from somatic cells to ensure exclusive localization of the P-granules in germ cells. Essential for dauer development and life-span extension. The chain is Protein lgg-2 from Caenorhabditis elegans.